Reading from the N-terminus, the 670-residue chain is Probable ATP-citrate synthase subunit 1 (670 aa).

The tract at residues 1–22 (MPSATTASTNGANGASASPAPG) is disordered. ATP is bound by residues 257–277 (LLRY…EVGG) and 308–334 (FKTE…KNKS). Residue Glu274 coordinates Mg(2+). The Tele-phosphohistidine intermediate role is filled by His316. Residue 335–345 (MREAGFYVPDT) coordinates CoA.

Belongs to the succinate/malate CoA ligase alpha subunit family. Composed of two subunits.

It is found in the cytoplasm. The catalysed reaction is oxaloacetate + acetyl-CoA + ADP + phosphate = citrate + ATP + CoA. Catalyzes the formation of cytosolic acetyl-CoA, which is mainly used for the biosynthesis of fatty acids and sterols. The chain is Probable ATP-citrate synthase subunit 1 from Neurospora crassa (strain ATCC 24698 / 74-OR23-1A / CBS 708.71 / DSM 1257 / FGSC 987).